The chain runs to 144 residues: Bacilliredoxin BCE_2233 (144 aa).

The protein belongs to the bacilliredoxin family.

This Bacillus cereus (strain ATCC 10987 / NRS 248) protein is Bacilliredoxin BCE_2233.